The sequence spans 300 residues: NAD kinase (300 aa).

Catalysis depends on Asp-75, which acts as the Proton acceptor. NAD(+) is bound by residues 75 to 76 (DG), 149 to 150 (ND), Arg-177, Asp-179, 190 to 195 (TAYALS), Ala-214, and Gln-248.

The protein belongs to the NAD kinase family. The cofactor is a divalent metal cation.

The protein localises to the cytoplasm. The catalysed reaction is NAD(+) + ATP = ADP + NADP(+) + H(+). Functionally, involved in the regulation of the intracellular balance of NAD and NADP, and is a key enzyme in the biosynthesis of NADP. Catalyzes specifically the phosphorylation on 2'-hydroxyl of the adenosine moiety of NAD to yield NADP. This is NAD kinase from Burkholderia cenocepacia (strain HI2424).